The sequence spans 77 residues: Homeodomain-only protein (77 aa).

A DNA-binding region (homeobox; degenerate) is located at residues 7 to 65; it reads AALGVRLTEDQVKVLEENFTKVSKHPDETTLMLIAAECGLSEEQTAVWFRMRNAQWRKA.

The protein localises to the nucleus. It localises to the cytoplasm. In terms of biological role, atypical homeodomain protein which does not bind DNA and is required to modulate cardiac growth and development. May act via an interaction with SRF, leading to modulate the expression of SRF-dependent cardiac-specific genes and cardiac development. May act as a co-chaperone for HSPA1A and HSPA1B chaperone proteins and assist in chaperone-mediated protein refolding. The polypeptide is Homeodomain-only protein (hopx) (Danio rerio (Zebrafish)).